A 442-amino-acid chain; its full sequence is MTCYRGFLLGSCCRVAGGRAAALRGPGAGGPAARPRLGGDGGGRRHLGQGQPRELAGCGSRADGGFRPSRVVVVAKTTRYEFEQQRYRYAELSEEDLKQLLALKGSSYSGLLERHHIHTKNVEHIIDSLRNEGIEVRLVKRREYDEETVRWADAVIAAGGDGTMLLAASKVLDRLKPVIGVNTDPERSEGHLCLPVRYTHSFPEALQKFYRGEFRWLWRQRIRLYLEGTGINPVPVDLHEQQLSLNQHNRALNIERAHDERSEASGPQLLPVRALNEVFIGESLSSRASYYEISVDDGPWEKQKSSGLNLCTGTGSKAWSFNINRVATQAVEDVLNIAKRQGNLSLPLNRELVEKVTNEYNESLLYSPEEPKILFSIREPIANRVFSSSRQRCFSSKVCVRSRCWDACMVVDGGTSFEFNDGAIASMMINKEDELRTVLLEQ.

The transit peptide at 1-62 (MTCYRGFLLG…RELAGCGSRA (62 aa)) directs the protein to the mitochondrion. The segment covering 24–36 (RGPGAGGPAARPR) has biased composition (low complexity). The segment at 24 to 60 (RGPGAGGPAARPRLGGDGGGRRHLGQGQPRELAGCGS) is disordered. At lysine 76 the chain carries N6-acetyllysine; alternate. Lysine 76 carries the N6-succinyllysine; alternate modification. The residue at position 188 (serine 188) is a Phosphoserine. Lysine 302 is modified (N6-succinyllysine). The residue at position 317 (lysine 317) is an N6-acetyllysine; alternate. N6-succinyllysine; alternate is present on lysine 317. Phosphoserine is present on serine 367. Lysine 397 carries the N6-acetyllysine modification.

Belongs to the NAD kinase family. As to quaternary structure, homodimer. Widely expressed.

Its subcellular location is the mitochondrion. It carries out the reaction NAD(+) + ATP = ADP + NADP(+) + H(+). Inhibited by NADH, NADPH and NADP(+). Its function is as follows. Mitochondrial NAD(+) kinase that phosphorylates NAD(+) to yield NADP(+). Can use both ATP or inorganic polyphosphate as the phosphoryl donor. Also has weak NADH kinase activity in vitro; however NADH kinase activity is much weaker than the NAD(+) kinase activity and may not be relevant in vivo. The sequence is that of NAD kinase 2, mitochondrial (NADK2) from Homo sapiens (Human).